A 565-amino-acid chain; its full sequence is Sensor histidine kinase MtrB (565 aa).

Residues 1-13 (MMWGSRRRTRSRW) are compositionally biased toward basic residues. Residues 1 to 21 (MMWGSRRRTRSRWGRSGPMTR) form a disordered region. The next 2 membrane-spanning stretches (helical) occupy residues 42 to 62 (VVAL…FVLT) and 213 to 233 (GTMI…ALLV). The HAMP domain occupies 235-287 (RQVVVPVRSASRIAERFAEGHLSERMPVRGEDDMARLAMSFNDMAESLSRQIT). The region spanning 302–519 (DVSHELRTPL…CFRLTLPLVR (218 aa)) is the Histidine kinase domain. H305 bears the Phosphohistidine; by autocatalysis mark. Positions 524–565 (TTSPLPMKPIPQPSPSGGQSPSTGPQHAKDRARQREHAERSL) are disordered. Residues 538-549 (PSGGQSPSTGPQ) show a composition bias toward low complexity. Over residues 550-565 (HAKDRARQREHAERSL) the composition is skewed to basic and acidic residues.

It localises to the cell membrane. The enzyme catalyses ATP + protein L-histidine = ADP + protein N-phospho-L-histidine.. Member of the two-component regulatory system MtrA/MtrB. Seems to function as a membrane-associated protein kinase that phosphorylates MtrA in response to environmental signals. The protein is Sensor histidine kinase MtrB (mtrB) of Mycolicibacterium paratuberculosis (strain ATCC BAA-968 / K-10) (Mycobacterium paratuberculosis).